The primary structure comprises 119 residues: Large ribosomal subunit protein uL18 (119 aa).

It belongs to the universal ribosomal protein uL18 family. Part of the 50S ribosomal subunit; part of the 5S rRNA/L5/L18/L25 subcomplex. Contacts the 5S and 23S rRNAs.

In terms of biological role, this is one of the proteins that bind and probably mediate the attachment of the 5S RNA into the large ribosomal subunit, where it forms part of the central protuberance. This Xanthomonas oryzae pv. oryzae (strain PXO99A) protein is Large ribosomal subunit protein uL18.